A 557-amino-acid chain; its full sequence is Arginine--tRNA ligase (557 aa).

The 'HIGH' region motif lies at 132–142 (ANPTGNLHLGH).

This sequence belongs to the class-I aminoacyl-tRNA synthetase family. In terms of assembly, monomer.

Its subcellular location is the cytoplasm. The enzyme catalyses tRNA(Arg) + L-arginine + ATP = L-arginyl-tRNA(Arg) + AMP + diphosphate. In Geobacillus thermodenitrificans (strain NG80-2), this protein is Arginine--tRNA ligase.